Reading from the N-terminus, the 104-residue chain is Large ribosomal subunit protein uL23 (104 aa).

It belongs to the universal ribosomal protein uL23 family. As to quaternary structure, part of the 50S ribosomal subunit. Contacts protein L29, and trigger factor when it is bound to the ribosome.

In terms of biological role, one of the early assembly proteins it binds 23S rRNA. One of the proteins that surrounds the polypeptide exit tunnel on the outside of the ribosome. Forms the main docking site for trigger factor binding to the ribosome. This is Large ribosomal subunit protein uL23 from Leptospira interrogans serogroup Icterohaemorrhagiae serovar copenhageni (strain Fiocruz L1-130).